The chain runs to 240 residues: uncharacterized protein (240 aa).

The ABC transporter domain occupies 2–223 (VRIQDLSLAF…GNAPRELHQA (222 aa)). 34–41 (GSSGVGKS) serves as a coordination point for ATP.

The protein belongs to the ABC transporter superfamily.

This is an uncharacterized protein from Haemophilus influenzae (strain ATCC 51907 / DSM 11121 / KW20 / Rd).